We begin with the raw amino-acid sequence, 199 residues long: Dephospho-CoA kinase (199 aa).

Residues 3–199 (ILGLTGSIGM…ATAKMPQRRA (197 aa)) enclose the DPCK domain. 11–16 (GMGKST) is an ATP binding site.

Belongs to the CoaE family.

The protein localises to the cytoplasm. The enzyme catalyses 3'-dephospho-CoA + ATP = ADP + CoA + H(+). Its pathway is cofactor biosynthesis; coenzyme A biosynthesis; CoA from (R)-pantothenate: step 5/5. Functionally, catalyzes the phosphorylation of the 3'-hydroxyl group of dephosphocoenzyme A to form coenzyme A. The polypeptide is Dephospho-CoA kinase (Rhodopseudomonas palustris (strain BisB18)).